The primary structure comprises 62 residues: Large ribosomal subunit protein eL24 (62 aa).

Zn(2+)-binding residues include Cys-6, Cys-9, Cys-32, and Cys-36. The C4-type zinc finger occupies Cys-6–Cys-36.

It belongs to the eukaryotic ribosomal protein eL24 family. Part of the 50S ribosomal subunit. Forms a cluster with proteins L3 and L14. Zn(2+) is required as a cofactor.

In terms of biological role, binds to the 23S rRNA. In Methanosarcina mazei (strain ATCC BAA-159 / DSM 3647 / Goe1 / Go1 / JCM 11833 / OCM 88) (Methanosarcina frisia), this protein is Large ribosomal subunit protein eL24.